The following is a 335-amino-acid chain: Nucleoid-associated protein PSEEN4449 (335 aa).

The protein belongs to the YejK family.

The protein resides in the cytoplasm. It localises to the nucleoid. This chain is Nucleoid-associated protein PSEEN4449, found in Pseudomonas entomophila (strain L48).